Consider the following 514-residue polypeptide: F-box-like/WD repeat-containing protein TBL1XR1 (514 aa).

Ser2 is modified (N-acetylserine). The 33-residue stretch at 4 to 36 (SSDEVNFLVYRYLQESGFSHSAFTFGIESHISQ) folds into the LisH domain. The F-box-like domain occupies 41–86 (GALVPPAALISIIQKGLQYVEAEVSINEDGTLFDGRPIESLSLIDA). Lys102 carries the post-translational modification N6-acetyllysine. Positions 114-139 (AAAATNQQGSAKNGENTANGEENGAH) are disordered. Low complexity predominate over residues 124–135 (AKNGENTANGEE). WD repeat units lie at residues 167 to 206 (GHES…TSGP), 223 to 262 (PSNK…ASTL), 264 to 303 (QHKG…AKQQ), 306 to 344 (FHSA…PIKT), 347 to 386 (GHTN…CVHD), 389 to 437 (AHNK…CIHT), 440 to 479 (KHQE…LVHS), and 481 to 513 (RGTG…LDLR). Lys277 participates in a covalent cross-link: Glycyl lysine isopeptide (Lys-Gly) (interchain with G-Cter in SUMO2).

It belongs to the WD repeat EBI family. As to quaternary structure, component of the N-Cor repressor complex, at least composed of NCOR1, NCOR2, HDAC3, TBL1X, TBL1XR1, CORO2A and GPS2. Probable component of some E3 ubiquitin ligase complex. Interacts with histones H2B and H4. Interacts with MECP2; bridges interaction between MECP2 and NCOR1. Interacts with USP44.

It is found in the nucleus. Its function is as follows. F-box-like protein involved in the recruitment of the ubiquitin/19S proteasome complex to nuclear receptor-regulated transcription units. Plays an essential role in transcription activation mediated by nuclear receptors. Probably acts as integral component of the N-Cor corepressor complex that mediates the recruitment of the 19S proteasome complex, leading to the subsequent proteasomal degradation of N-Cor complex, thereby allowing cofactor exchange, and transcription activation. In Mus musculus (Mouse), this protein is F-box-like/WD repeat-containing protein TBL1XR1 (Tbl1xr1).